The following is a 180-amino-acid chain: MHEFVTICIMAAALGMDAFSVALGMGMLKLSGKQIFRIGLTIGLFHVAMPLAGMAVGKWLSGHFDVIATYIGGGLLLVIGVQMALNAFSDHEAEGLKPAGWGLLLFAVGVSLDSFSAGLSFGILGTEMFVTVGMIGAMSMVMSWIGLIVGSHFQKFLGAYGELLGGLVLIGFGLKIMLPL.

6 helical membrane-spanning segments follow: residues 4 to 24, 40 to 60, 64 to 84, 103 to 123, 129 to 149, and 156 to 176; these read FVTI…VALG, LTIG…GKWL, FDVI…VQMA, LLLF…SFGI, FVTV…GLIV, and FLGA…GLKI.

This sequence belongs to the MntP (TC 9.B.29) family.

It is found in the cell membrane. Functionally, probably functions as a manganese efflux pump. This Shouchella clausii (strain KSM-K16) (Alkalihalobacillus clausii) protein is Putative manganese efflux pump MntP.